The primary structure comprises 542 residues: Adenine deaminase (542 aa).

This sequence belongs to the metallo-dependent hydrolases superfamily. Adenine deaminase family. It depends on Mn(2+) as a cofactor.

The enzyme catalyses adenine + H2O + H(+) = hypoxanthine + NH4(+). This chain is Adenine deaminase, found in Methanosphaera stadtmanae (strain ATCC 43021 / DSM 3091 / JCM 11832 / MCB-3).